Here is a 282-residue protein sequence, read N- to C-terminus: 3-methyl-2-oxobutanoate hydroxymethyltransferase (282 aa).

Asp44 and Asp83 together coordinate Mg(2+). 3-methyl-2-oxobutanoate is bound by residues 44 to 45, Asp83, and Lys112; that span reads DS. Glu114 is a binding site for Mg(2+). Glu181 (proton acceptor) is an active-site residue.

Belongs to the PanB family. In terms of assembly, homodecamer; pentamer of dimers. Mg(2+) is required as a cofactor.

It localises to the cytoplasm. The enzyme catalyses 3-methyl-2-oxobutanoate + (6R)-5,10-methylene-5,6,7,8-tetrahydrofolate + H2O = 2-dehydropantoate + (6S)-5,6,7,8-tetrahydrofolate. The protein operates within cofactor biosynthesis; coenzyme A biosynthesis. Catalyzes the reversible reaction in which hydroxymethyl group from 5,10-methylenetetrahydrofolate is transferred onto alpha-ketoisovalerate to form ketopantoate. This Pyrococcus abyssi (strain GE5 / Orsay) protein is 3-methyl-2-oxobutanoate hydroxymethyltransferase.